Consider the following 270-residue polypeptide: uncharacterized protein (270 aa).

An N-terminal signal peptide occupies residues 1–22 (MGYIKRMALYMSVFLLIIFIVG). A lipid anchor (N-palmitoyl cysteine) is attached at C23. Residue C23 is the site of S-diacylglycerol cysteine attachment.

It belongs to the staphylococcal tandem lipoprotein family.

It localises to the cell membrane. This is an uncharacterized protein from Staphylococcus aureus (strain COL).